The chain runs to 624 residues: Glutamine--fructose-6-phosphate aminotransferase [isomerizing] (624 aa).

Cys-2 functions as the Nucleophile; for GATase activity in the catalytic mechanism. One can recognise a Glutamine amidotransferase type-2 domain in the interval 2–225; the sequence is CGIVGYVGRR…QDQAVVITAD (224 aa). 2 consecutive SIS domains span residues 297 to 436 and 469 to 614; these read SDQE…ARGT and LAHR…VDKP. Lys-619 functions as the For Fru-6P isomerization activity in the catalytic mechanism.

As to quaternary structure, homodimer.

Its subcellular location is the cytoplasm. It carries out the reaction D-fructose 6-phosphate + L-glutamine = D-glucosamine 6-phosphate + L-glutamate. Its function is as follows. Catalyzes the first step in hexosamine metabolism, converting fructose-6P into glucosamine-6P using glutamine as a nitrogen source. This Mycobacterium bovis (strain ATCC BAA-935 / AF2122/97) protein is Glutamine--fructose-6-phosphate aminotransferase [isomerizing].